The chain runs to 225 residues: C-reactive protein (225 aa).

An N-terminal signal peptide occupies residues M1 to A19. Q20 is modified (pyrrolidone carboxylic acid). In terms of domain architecture, Pentraxin (PTX) spans S24–P225. A disulfide bond links C55 and C116. Ca(2+) is bound by residues N80, E157, Q158, D159, and Q169.

The protein belongs to the pentraxin family. Homopentamer. Pentraxin (or pentaxin) have a discoid arrangement of 5 non-covalently bound subunits. Interacts with FCN1; may regulate monocyte activation by FCN1. Ca(2+) serves as cofactor. Found in plasma.

It localises to the secreted. Its function is as follows. Displays several functions associated with host defense: it promotes agglutination, bacterial capsular swelling, phagocytosis and complement fixation through its calcium-dependent binding to phosphorylcholine. Can interact with DNA and histones and may scavenge nuclear material released from damaged circulating cells. The sequence is that of C-reactive protein (CRP) from Mesocricetus auratus (Golden hamster).